A 515-amino-acid chain; its full sequence is WUSCHEL-related homeobox 12 (515 aa).

Composition is skewed to polar residues over residues 23–32 and 44–57; these read QQQPDMNGNG and TAATTGNGKPSLLS. 3 disordered regions span residues 23-76, 130-156, and 176-195; these read QQQP…WNPR, NKLRAAGHHHHHGRAAALPRASAPPST, and LLAATSSSSSSSDRSSGSSK. The segment covering 62 to 71 has biased composition (basic and acidic residues); sequence EGTRNPEPKP. Positions 68–132 form a DNA-binding region, homeobox; WUS-type; the sequence is EPKPRWNPRP…NRKSRTKNKL (65 aa). Residues 130-143 are compositionally biased toward basic residues; that stretch reads NKLRAAGHHHHHGR. Composition is skewed to low complexity over residues 144–156 and 177–195; these read AAALPRASAPPST and LAATSSSSSSSDRSSGSSK.

This sequence belongs to the WUS homeobox family.

The protein localises to the nucleus. Its function is as follows. Transcription factor which may be involved in developmental processes. This Oryza sativa subsp. japonica (Rice) protein is WUSCHEL-related homeobox 12 (WOX12).